The sequence spans 165 residues: Regulator of ribonuclease activity A (165 aa).

It belongs to the RraA family. Homotrimer. Binds to both RNA-binding sites in the C-terminal region of Rne and to RhlB.

It localises to the cytoplasm. Globally modulates RNA abundance by binding to RNase E (Rne) and regulating its endonucleolytic activity. Can modulate Rne action in a substrate-dependent manner by altering the composition of the degradosome. Modulates RNA-binding and helicase activities of the degradosome. This is Regulator of ribonuclease activity A from Actinobacillus pleuropneumoniae serotype 7 (strain AP76).